A 233-amino-acid polypeptide reads, in one-letter code: Octanoyltransferase (233 aa).

Positions 34 to 212 (PDRPDVLLLL…AFAQTFELDL (179 aa)) constitute a BPL/LPL catalytic domain. Substrate is bound by residues 76-83 (RGGEVTHH), 143-145 (AIG), and 156-158 (GFA). The active-site Acyl-thioester intermediate is the Cys-174.

This sequence belongs to the LipB family.

The protein localises to the cytoplasm. The catalysed reaction is octanoyl-[ACP] + L-lysyl-[protein] = N(6)-octanoyl-L-lysyl-[protein] + holo-[ACP] + H(+). The protein operates within protein modification; protein lipoylation via endogenous pathway; protein N(6)-(lipoyl)lysine from octanoyl-[acyl-carrier-protein]: step 1/2. Functionally, catalyzes the transfer of endogenously produced octanoic acid from octanoyl-acyl-carrier-protein onto the lipoyl domains of lipoate-dependent enzymes. Lipoyl-ACP can also act as a substrate although octanoyl-ACP is likely to be the physiological substrate. The sequence is that of Octanoyltransferase from Synechococcus elongatus (strain ATCC 33912 / PCC 7942 / FACHB-805) (Anacystis nidulans R2).